Reading from the N-terminus, the 436-residue chain is Trigger factor (436 aa).

The 86-residue stretch at 163 to 248 folds into the PPIase FKBP-type domain; the sequence is GDTVVIDFDG…IHEVKEKQLP (86 aa).

It belongs to the FKBP-type PPIase family. Tig subfamily.

It is found in the cytoplasm. It carries out the reaction [protein]-peptidylproline (omega=180) = [protein]-peptidylproline (omega=0). Its function is as follows. Involved in protein export. Acts as a chaperone by maintaining the newly synthesized protein in an open conformation. Functions as a peptidyl-prolyl cis-trans isomerase. This is Trigger factor from Levilactobacillus brevis (strain ATCC 367 / BCRC 12310 / CIP 105137 / JCM 1170 / LMG 11437 / NCIMB 947 / NCTC 947) (Lactobacillus brevis).